A 317-amino-acid polypeptide reads, in one-letter code: Phosphatidylglycerol--prolipoprotein diacylglyceryl transferase 2 (317 aa).

The next 4 membrane-spanning stretches (helical) occupy residues 19–39 (IPLR…VWLG), 51–71 (GVIA…GRLY), 93–113 (VWEG…GAWI), and 120–140 (IPLP…QAIG). A 1,2-diacyl-sn-glycero-3-phospho-(1'-sn-glycerol) is bound at residue Arg-141. Helical transmembrane passes span 180–200 (PTFL…LWAA), 211–230 (FALY…YLRI), and 241–261 (LNNW…VVSA). The segment at 275 to 317 (GAGADGRTDDPRPADASVGLASGPPGNSTPRRATESWNVRNRS) is disordered. Positions 299-317 (PGNSTPRRATESWNVRNRS) are enriched in polar residues.

The protein belongs to the Lgt family.

It localises to the cell membrane. It catalyses the reaction L-cysteinyl-[prolipoprotein] + a 1,2-diacyl-sn-glycero-3-phospho-(1'-sn-glycerol) = an S-1,2-diacyl-sn-glyceryl-L-cysteinyl-[prolipoprotein] + sn-glycerol 1-phosphate + H(+). It functions in the pathway protein modification; lipoprotein biosynthesis (diacylglyceryl transfer). Its function is as follows. Catalyzes the transfer of the diacylglyceryl group from phosphatidylglycerol to the sulfhydryl group of the N-terminal cysteine of a prolipoprotein, the first step in the formation of mature lipoproteins. The sequence is that of Phosphatidylglycerol--prolipoprotein diacylglyceryl transferase 2 from Streptomyces coelicolor (strain ATCC BAA-471 / A3(2) / M145).